The primary structure comprises 153 residues: Ubiquitin-conjugating enzyme E2 ubc-18 (153 aa).

Positions 2 to 149 constitute a UBC core domain; it reads SATRRLQKEL…AEEHTRKHAE (148 aa). Catalysis depends on Cys86, which acts as the Glycyl thioester intermediate.

This sequence belongs to the ubiquitin-conjugating enzyme family. In terms of assembly, interacts with E3 ubiquitin-protein ligase wwp-1. Interacts with RBR-type E3 ubiquitin transferase ari-1.1. Expressed in neurons localized in the head and tail of adults.

The enzyme catalyses S-ubiquitinyl-[E1 ubiquitin-activating enzyme]-L-cysteine + [E2 ubiquitin-conjugating enzyme]-L-cysteine = [E1 ubiquitin-activating enzyme]-L-cysteine + S-ubiquitinyl-[E2 ubiquitin-conjugating enzyme]-L-cysteine.. Ubiquitin-conjugating enzyme E2. Accepts ubiquitin from the E1 complex and catalyzes its covalent attachment to other proteins. Required for diet restriction-mediated lifespan extension, probably acting as part of a complex with ubiquitin-protein ligase wwp-1. Acts redundantly with lin-35/Rb in the regulation of pharyngeal morphogenesis during embryonic development by negatively regulating the expression of proteins such as sup-35. In Caenorhabditis elegans, this protein is Ubiquitin-conjugating enzyme E2 ubc-18.